Reading from the N-terminus, the 152-residue chain is Ribonuclease pancreatic gamma-type (152 aa).

An N-terminal signal peptide occupies residues 1–25; it reads MGLEKSLFLFSLLVLVLGWVQPSLG. Positions 35 and 38 each coordinate substrate. Histidine 40 (proton acceptor) is an active-site residue. Disulfide bonds link cysteine 54/cysteine 112, cysteine 68/cysteine 123, cysteine 86/cysteine 138, and cysteine 93/cysteine 100. Substrate is bound by residues 69-73, lysine 94, and arginine 113; that span reads KSMNT. Histidine 147 functions as the Proton donor in the catalytic mechanism.

It belongs to the pancreatic ribonuclease family. In terms of assembly, monomer.

Its subcellular location is the secreted. It catalyses the reaction an [RNA] containing cytidine + H2O = an [RNA]-3'-cytidine-3'-phosphate + a 5'-hydroxy-ribonucleotide-3'-[RNA].. It carries out the reaction an [RNA] containing uridine + H2O = an [RNA]-3'-uridine-3'-phosphate + a 5'-hydroxy-ribonucleotide-3'-[RNA].. In terms of biological role, endonuclease that catalyzes the cleavage of RNA on the 3' side of pyrimidine nucleotides. Acts on single-stranded and double-stranded RNA. This chain is Ribonuclease pancreatic gamma-type, found in Rattus norvegicus (Rat).